The primary structure comprises 79 residues: MQLDVFSRMMFGDAAKPTEEKEEEQQEEVSQVSQTNDEETINYMHIMDQIGSIMNSLDQIKPALKELAPMLSAIKKKIM.

The disordered stretch occupies residues 1–37 (MQLDVFSRMMFGDAAKPTEEKEEEQQEEVSQVSQTND).

This is an uncharacterized protein from Bacillus subtilis (strain 168).